The sequence spans 756 residues: MDSGRDFLTLHGLQDDPDLQALLKGSQLLKVKSSSWRRERFYKLQEDCKTIWQESRKVMRSPESQLFSIEDIQEVRMGHRTEGLEKFARDIPEDRCFSIVFKDQRNTLDLIAPSPADAQHWVQGLRKIIHHSGSMDQRQKLQHWIHSCLRKADKNKDNKMNFKELKDFLKELNIQVDDGYARKIFRECDHSQTDSLEDEEIETFYKMLTQRAEIDRAFEEAAGSAETLSVERLVTFLQHQQREEEAGPALALSLIERYEPSETAKAQRQMTKDGFLMYLLSADGNAFSLAHRRVYQDMDQPLSHYLVSSSHNTYLLEDQLTGPSSTEAYIRALCKGCRCLELDCWDGPNQEPIIYHGYTFTSKILFCDVLRAIRDYAFKASPYPVILSLENHCSLEQQRVMARHLRAILGPILLDQPLDGVTTSLPSPEQLKGKILLKGKKLGGLLPAGGENGSEATDVSDEVEAAEMEDEAVRSQVQHKPKEDKLKLVPELSDMIIYCKSVHFGGFSSPGTSGQAFYEMASFSESRALRLLQESGNGFVRHNVSCLSRIYPAGWRTDSSNYSPVEMWNGGCQIVALNFQTPGPEMDVYLGCFQDNGGCGYVLKPAFLRDPNTTFNSRALTQGPWWRPERLRVRIISGQQLPKVNKNKNSIVDPKVIVEIHGVGRDTGSRQTAVITNNGFNPRWDMEFEFEVTVPDLALVRFMVEDYDSSSKNDFIGQSTIPWNSLKQGYRHVHLLSKNGDQHPSATLFVKISIQD.

Residues 21 to 130 enclose the PH domain; that stretch reads ALLKGSQLLK…WVQGLRKIIH (110 aa). Residues 30-57 are substrate binding; the sequence is KVKSSSWRRERFYKLQEDCKTIWQESRK. EF-hand domains are found at residues 140-175 and 176-211; these read KLQH…LNIQ and VDDG…LTQR. Residues D153, N155, D157, K159, E164, D189, S191, T193, S195, and E200 each coordinate Ca(2+). S191 carries an O-linked (GlcNAc) serine glycan. T193 carries O-linked (GlcNAc) threonine glycosylation. The PI-PLC X-box domain occupies 296 to 440; it reads QDMDQPLSHY…LKGKILLKGK (145 aa). H311 is a catalytic residue. Ca(2+) is bound by residues N312, E341, and D343. H356 is a catalytic residue. E390 provides a ligand contact to Ca(2+). Positions 438 and 440 each coordinate substrate. A Phosphothreonine modification is found at T457. Phosphoserine is present on S460. Residues 492 to 609 enclose the PI-PLC Y-box domain; that stretch reads LSDMIIYCKS…GYVLKPAFLR (118 aa). Substrate is bound by residues S522 and R549. The C2 domain occupies 609 to 737; that stretch reads RDPNTTFNSR…QGYRHVHLLS (129 aa). Residues I651, D653, N677, D706, Y707, and D708 each contribute to the Ca(2+) site.

As to quaternary structure, interacts with TGM2. Ca(2+) is required as a cofactor.

It catalyses the reaction a 1,2-diacyl-sn-glycero-3-phospho-(1D-myo-inositol-4,5-bisphosphate) + H2O = 1D-myo-inositol 1,4,5-trisphosphate + a 1,2-diacyl-sn-glycerol + H(+). The enzyme catalyses a 1,2-diacyl-sn-glycero-3-phospho-(1D-myo-inositol) + H2O = 1D-myo-inositol 1-phosphate + a 1,2-diacyl-sn-glycerol + H(+). The production of the second messenger molecules diacylglycerol (DAG) and inositol 1,4,5-trisphosphate (IP3) is mediated by activated phosphatidylinositol-specific phospholipase C enzymes. Essential for trophoblast and placental development. Binds phosphatidylinositol 4,5-bisphosphate. The sequence is that of 1-phosphatidylinositol 4,5-bisphosphate phosphodiesterase delta-1 from Rattus norvegicus (Rat).